The sequence spans 346 residues: UPF0324 membrane protein FN0533 (346 aa).

Helical transmembrane passes span 5–22 (LYGIILCFLLALPAWKLG), 27–49 (LVGGPVFGIIIGIVIAILLKNRA), 62–81 (VLQYAVILLGFGLNLQTIIS), 86–108 (SLPIIVSTISTSLIIAYILAKLI), 115–137 (VILIGVGSSICGGSAIAATAPVI), 147–169 (AISVIFLFNVIAALIFPTLGDIL), 216–233 (LTRTLAIIPITLFLAVYN), 248–270 (IFPMFIVYFILASIITTVCNYFI), 283–305 (INNVFSFFKHLSKFFIIMAMVAI), and 315–337 (ILSGAKPLTLGFCCWFAISLVSI).

Belongs to the UPF0324 family.

The protein resides in the cell membrane. The sequence is that of UPF0324 membrane protein FN0533 from Fusobacterium nucleatum subsp. nucleatum (strain ATCC 25586 / DSM 15643 / BCRC 10681 / CIP 101130 / JCM 8532 / KCTC 2640 / LMG 13131 / VPI 4355).